We begin with the raw amino-acid sequence, 774 residues long: Ion-translocating oxidoreductase complex subunit C (774 aa).

4Fe-4S ferredoxin-type domains are found at residues 368 to 398 and 408 to 437; these read ELTS…QQLQ and KCEE…VQYY. [4Fe-4S] cluster-binding residues include Cys378, Cys381, Cys384, Cys388, Cys417, Cys420, Cys423, and Cys427. A compositionally biased stretch (basic and acidic residues) spans 459 to 490; sequence ARFEEKKARMERDKAERENRFKQAAEDRRKEM. Disordered regions lie at residues 459-496 and 533-774; these read ARFE…QGGS and AKQA…EEKD. The span at 533-545 shows a compositional bias: low complexity; the sequence is AKQAEAAQSGASE. Residues 550–572 are compositionally biased toward basic and acidic residues; the sequence is EMAKLREERKRQARERKAQKGEV. Over residues 605 to 618 the composition is skewed to low complexity; it reads TESAAQPAQATPSS. 4 stretches are compositionally biased toward polar residues: residues 645–658, 686–698, 725–738, and 762–774; these read TEST…TPSS, ESAA…TPSS, TESA…TPSS, and QQSS…EEKD.

The protein belongs to the 4Fe4S bacterial-type ferredoxin family. RnfC subfamily. As to quaternary structure, the complex is composed of six subunits: RnfA, RnfB, RnfC, RnfD, RnfE and RnfG. [4Fe-4S] cluster is required as a cofactor.

It is found in the cell inner membrane. Part of a membrane-bound complex that couples electron transfer with translocation of ions across the membrane. The chain is Ion-translocating oxidoreductase complex subunit C from Vibrio cholerae serotype O1 (strain ATCC 39315 / El Tor Inaba N16961).